We begin with the raw amino-acid sequence, 297 residues long: Protein-L-isoaspartate O-methyltransferase (297 aa).

Residues 20–57 (RKPAPARTAGMPAVGAPGPAQAQAKARDKQPSAPTAAA) are disordered. The segment covering 28–43 (AGMPAVGAPGPAQAQA) has biased composition (low complexity). Residue Ser133 is part of the active site.

The protein belongs to the methyltransferase superfamily. L-isoaspartyl/D-aspartyl protein methyltransferase family.

The protein resides in the cytoplasm. It carries out the reaction [protein]-L-isoaspartate + S-adenosyl-L-methionine = [protein]-L-isoaspartate alpha-methyl ester + S-adenosyl-L-homocysteine. Functionally, catalyzes the methyl esterification of L-isoaspartyl residues in peptides and proteins that result from spontaneous decomposition of normal L-aspartyl and L-asparaginyl residues. It plays a role in the repair and/or degradation of damaged proteins. This Cupriavidus pinatubonensis (strain JMP 134 / LMG 1197) (Cupriavidus necator (strain JMP 134)) protein is Protein-L-isoaspartate O-methyltransferase.